The primary structure comprises 332 residues: 2-hydroxyacid dehydrogenase homolog 1 (332 aa).

NAD(+) contacts are provided by residues 154-155, 233-235, and D259; these read RI and TSR. Residue R235 is part of the active site. Residue E264 is part of the active site. H296 functions as the Proton donor in the catalytic mechanism. An NAD(+)-binding site is contributed by 296–299; the sequence is HQAF.

The protein belongs to the D-isomer specific 2-hydroxyacid dehydrogenase family.

The protein localises to the cytoplasm. Its subcellular location is the nucleus. This chain is 2-hydroxyacid dehydrogenase homolog 1, found in Schizosaccharomyces pombe (strain 972 / ATCC 24843) (Fission yeast).